The chain runs to 687 residues: Putative lipase YDR444W (687 aa).

Catalysis depends on S284, which acts as the Charge relay system. Disordered stretches follow at residues 429 to 472, 491 to 513, and 650 to 687; these read IRKK…AESP, KINK…EQGV, and ELAE…ENAT. The span at 436–463 shows a compositional bias: low complexity; sequence SPTSSEFVSSDSPESSGASSPSNENGNN. Residues 670 to 681 are compositionally biased toward basic and acidic residues; the sequence is RSNEYNEGEISK.

Belongs to the putative lipase ROG1 family.

It is found in the cytoplasm. The sequence is that of Putative lipase YDR444W from Saccharomyces cerevisiae (strain ATCC 204508 / S288c) (Baker's yeast).